The sequence spans 932 residues: 2-oxoglutarate dehydrogenase E1 component (932 aa).

Belongs to the alpha-ketoglutarate dehydrogenase family. Homodimer. Part of the 2-oxoglutarate dehydrogenase (OGDH) complex composed of E1 (2-oxoglutarate dehydrogenase), E2 (dihydrolipoamide succinyltransferase) and E3 (dihydrolipoamide dehydrogenase); the complex contains multiple copies of the three enzymatic components (E1, E2 and E3). Thiamine diphosphate is required as a cofactor.

The enzyme catalyses N(6)-[(R)-lipoyl]-L-lysyl-[protein] + 2-oxoglutarate + H(+) = N(6)-[(R)-S(8)-succinyldihydrolipoyl]-L-lysyl-[protein] + CO2. In terms of biological role, E1 component of the 2-oxoglutarate dehydrogenase (OGDH) complex which catalyzes the decarboxylation of 2-oxoglutarate, the first step in the conversion of 2-oxoglutarate to succinyl-CoA and CO(2). This Staphylococcus aureus (strain JH9) protein is 2-oxoglutarate dehydrogenase E1 component.